Consider the following 346-residue polypeptide: UPF0421 protein OB2406 (346 aa).

4 helical membrane-spanning segments follow: residues isoleucine 16–valine 36, leucine 55–phenylalanine 75, leucine 102–methionine 122, and leucine 128–proline 148.

This sequence belongs to the UPF0421 family.

The protein resides in the cell membrane. The polypeptide is UPF0421 protein OB2406 (Oceanobacillus iheyensis (strain DSM 14371 / CIP 107618 / JCM 11309 / KCTC 3954 / HTE831)).